Consider the following 140-residue polypeptide: Profilin-2 (140 aa).

N-acetylalanine is present on Ala2.

The protein belongs to the profilin family. Occurs in many kinds of cells as a complex with monomeric actin in a 1:1 ratio. Interacts with PFN2. As to quaternary structure, interacts with ACTMAP (via N-terminus); the interaction may facilitate efficient cleavage of the acetylated N-terminus of immature actin by ACTMAP. As to expression, highly expressed in brain, skeletal muscle and kidney and less strongly in heart, placenta, lung and liver.

Its subcellular location is the cytoplasm. It localises to the cytoskeleton. In terms of biological role, binds to actin and affects the structure of the cytoskeleton. At high concentrations, profilin prevents the polymerization of actin, whereas it enhances it at low concentrations. By binding to PIP2, it inhibits the formation of IP3 and DG. This Homo sapiens (Human) protein is Profilin-2 (PFN2).